A 312-amino-acid polypeptide reads, in one-letter code: Acyl-CoA C20 Delta5-desaturase (312 aa).

The next 2 helical transmembrane spans lie at 45 to 65 and 69 to 89; these read VFHI…PSTF and SFWV…TLSF. His-90, His-95, His-127, His-130, and His-131 together coordinate Fe cation. Residues 90–95 carry the Histidine box-1 motif; the sequence is HRNLTH. A Histidine box-2 motif is present at residues 127-131; that stretch reads HRYHH. The chain crosses the membrane as a helical span at residues 193–213; sequence LQAALLYLFGGFPFIVWGMAV. Fe cation contacts are provided by His-230, His-259, His-262, and His-263. Positions 259-263 match the Histidine box-3 motif; sequence HNNHH.

The protein belongs to the fatty acid desaturase type 1 family. Requires Fe(2+) as cofactor.

The protein localises to the membrane. It carries out the reaction (11Z,14Z)-eicosadienoyl-CoA + AH2 + O2 = (5Z,11Z,14Z)-eicosatrienoyl-CoA + A + 2 H2O. It catalyses the reaction (11Z,14Z,17Z)-eicosatrienoyl-CoA + AH2 + O2 = (5Z,11Z,14Z,17Z)-eicosatetraenoyl-CoA + A + 2 H2O. It participates in lipid metabolism; polyunsaturated fatty acid biosynthesis. Functionally, catalyzes the desaturation of 20:2Delta(11,14) and 20:3Delta(11,14,17) to generate sciadonic acid (20:3Delta(5,11,14)) and juniperonic acid (20:4Delta(5,11,14,17)). This Anemone leveillei (Windflower) protein is Acyl-CoA C20 Delta5-desaturase.